A 451-amino-acid chain; its full sequence is Uronate isomerase (451 aa).

Belongs to the metallo-dependent hydrolases superfamily. Uronate isomerase family. In terms of assembly, homotrimer.

It carries out the reaction D-glucuronate = D-fructuronate. It catalyses the reaction aldehydo-D-galacturonate = keto-D-tagaturonate. The protein operates within carbohydrate metabolism; pentose and glucuronate interconversion. This is Uronate isomerase from Thermotoga maritima (strain ATCC 43589 / DSM 3109 / JCM 10099 / NBRC 100826 / MSB8).